The sequence spans 219 residues: Elongation factor Ts (219 aa).

Residues 82–85 (TDFV) are involved in Mg(2+) ion dislocation from EF-Tu.

This sequence belongs to the EF-Ts family.

The protein localises to the cytoplasm. Functionally, associates with the EF-Tu.GDP complex and induces the exchange of GDP to GTP. It remains bound to the aminoacyl-tRNA.EF-Tu.GTP complex up to the GTP hydrolysis stage on the ribosome. In Anaeromyxobacter sp. (strain K), this protein is Elongation factor Ts.